A 182-amino-acid polypeptide reads, in one-letter code: Putative manganese efflux pump MntP (182 aa).

6 helical membrane passes run leucine 6–glycine 26, isoleucine 37–valine 57, histidine 71–leucine 91, isoleucine 101–leucine 121, isoleucine 131–isoleucine 151, and tyrosine 162–isoleucine 182.

It belongs to the MntP (TC 9.B.29) family.

Its subcellular location is the cell membrane. Probably functions as a manganese efflux pump. This is Putative manganese efflux pump MntP from Bacillus cereus (strain B4264).